An 81-amino-acid polypeptide reads, in one-letter code: Sulfur carrier protein TusA (81 aa).

The active-site Cysteine persulfide intermediate is the Cys19.

This sequence belongs to the sulfur carrier protein TusA family.

The protein localises to the cytoplasm. Functionally, sulfur carrier protein which probably makes part of a sulfur-relay system. This is Sulfur carrier protein TusA from Shewanella piezotolerans (strain WP3 / JCM 13877).